The chain runs to 355 residues: UDP-N-acetylglucosamine--N-acetylmuramyl-(pentapeptide) pyrophosphoryl-undecaprenol N-acetylglucosamine transferase (355 aa).

UDP-N-acetyl-alpha-D-glucosamine-binding positions include 11–13 (TAG), Arg-164, Ser-194, and Gln-289.

Belongs to the glycosyltransferase 28 family. MurG subfamily.

The protein localises to the cell membrane. It carries out the reaction di-trans,octa-cis-undecaprenyl diphospho-N-acetyl-alpha-D-muramoyl-L-alanyl-D-glutamyl-meso-2,6-diaminopimeloyl-D-alanyl-D-alanine + UDP-N-acetyl-alpha-D-glucosamine = di-trans,octa-cis-undecaprenyl diphospho-[N-acetyl-alpha-D-glucosaminyl-(1-&gt;4)]-N-acetyl-alpha-D-muramoyl-L-alanyl-D-glutamyl-meso-2,6-diaminopimeloyl-D-alanyl-D-alanine + UDP + H(+). It functions in the pathway cell wall biogenesis; peptidoglycan biosynthesis. Functionally, cell wall formation. Catalyzes the transfer of a GlcNAc subunit on undecaprenyl-pyrophosphoryl-MurNAc-pentapeptide (lipid intermediate I) to form undecaprenyl-pyrophosphoryl-MurNAc-(pentapeptide)GlcNAc (lipid intermediate II). This chain is UDP-N-acetylglucosamine--N-acetylmuramyl-(pentapeptide) pyrophosphoryl-undecaprenol N-acetylglucosamine transferase, found in Lachnoclostridium phytofermentans (strain ATCC 700394 / DSM 18823 / ISDg) (Clostridium phytofermentans).